A 146-amino-acid polypeptide reads, in one-letter code: MLRLIIAAAVLVSACLAYPQRREGAPADAANLQSFDPALMSMQGMQGGQMPGMAGGQFLPFNPNLQMGYKRDFDENLEKRKQHSQFNADENKAPFDSEENFMNFLHNEKGDKHPFANVDSADTDLGQFEPSAENKNGEFRFFDKEQ.

The first 19 residues, 1 to 19 (MLRLIIAAAVLVSACLAYP), serve as a signal peptide directing secretion. The propeptide occupies 20 to 34 (QRREGAPADAANLQS). Met-40 is subject to Methionine sulfoxide; partial; in Cn2. Propeptides lie at residues 58–80 (FLPFNPNLQMGYKRDFDENLEKR) and 104–146 (FLHN…DKEQ). Positions 107 to 146 (NEKGDKHPFANVDSADTDLGQFEPSAENKNGEFRFFDKEQ) are disordered. The span at 135 to 146 (KNGEFRFFDKEQ) shows a compositional bias: basic and acidic residues.

Expressed by the venom duct.

Its subcellular location is the secreted. In Conus consors (Singed cone), this protein is Linear conopeptide.